The sequence spans 390 residues: 8-amino-7-oxononanoate synthase (390 aa).

Position 19 (arginine 19) interacts with substrate. 106–107 (GY) is a binding site for pyridoxal 5'-phosphate. Histidine 131 contacts substrate. The pyridoxal 5'-phosphate site is built by serine 176, histidine 204, and threonine 233. Lysine 236 is modified (N6-(pyridoxal phosphate)lysine). Residue threonine 350 participates in substrate binding.

Belongs to the class-II pyridoxal-phosphate-dependent aminotransferase family. BioF subfamily. Homodimer. The cofactor is pyridoxal 5'-phosphate.

It catalyses the reaction 6-carboxyhexanoyl-[ACP] + L-alanine + H(+) = (8S)-8-amino-7-oxononanoate + holo-[ACP] + CO2. The protein operates within cofactor biosynthesis; biotin biosynthesis. Its function is as follows. Catalyzes the decarboxylative condensation of pimeloyl-[acyl-carrier protein] and L-alanine to produce 8-amino-7-oxononanoate (AON), [acyl-carrier protein], and carbon dioxide. The polypeptide is 8-amino-7-oxononanoate synthase (Pseudomonas putida (strain ATCC 47054 / DSM 6125 / CFBP 8728 / NCIMB 11950 / KT2440)).